The following is a 1070-amino-acid chain: DNA-directed RNA polymerase subunit beta (1070 aa).

It belongs to the RNA polymerase beta chain family. In terms of assembly, in plastids the minimal PEP RNA polymerase catalytic core is composed of four subunits: alpha, beta, beta', and beta''. When a (nuclear-encoded) sigma factor is associated with the core the holoenzyme is formed, which can initiate transcription.

It is found in the plastid. The protein localises to the chloroplast. The enzyme catalyses RNA(n) + a ribonucleoside 5'-triphosphate = RNA(n+1) + diphosphate. Functionally, DNA-dependent RNA polymerase catalyzes the transcription of DNA into RNA using the four ribonucleoside triphosphates as substrates. The polypeptide is DNA-directed RNA polymerase subunit beta (Chloranthus spicatus (Chulantree)).